We begin with the raw amino-acid sequence, 293 residues long: ESX-3 secretion-associated protein EspG3 (293 aa).

This sequence belongs to the EspG family.

The protein localises to the cytoplasm. This is ESX-3 secretion-associated protein EspG3 from Mycolicibacterium smegmatis (strain ATCC 700084 / mc(2)155) (Mycobacterium smegmatis).